Consider the following 452-residue polypeptide: Acetyl-CoA decarbonylase/synthase complex subunit delta (452 aa).

It belongs to the CdhD family. As to quaternary structure, heterodimer of delta and gamma chains. The ACDS complex is made up of alpha, epsilon, beta, gamma and delta chains with a probable stoichiometry of (alpha(2)epsilon(2))(4)-beta(8)-(gamma(1)delta(1))(8).

Its function is as follows. Part of a complex that catalyzes the reversible cleavage of acetyl-CoA, allowing autotrophic growth from CO(2). Probably maintains the overall quaternary structure of the ACDS complex. This chain is Acetyl-CoA decarbonylase/synthase complex subunit delta, found in Archaeoglobus fulgidus (strain ATCC 49558 / DSM 4304 / JCM 9628 / NBRC 100126 / VC-16).